The sequence spans 219 residues: Cytidylate kinase (219 aa).

An ATP-binding site is contributed by Gly11–Ala19.

It belongs to the cytidylate kinase family. Type 1 subfamily.

The protein resides in the cytoplasm. The catalysed reaction is CMP + ATP = CDP + ADP. The enzyme catalyses dCMP + ATP = dCDP + ADP. This chain is Cytidylate kinase, found in Mesoplasma florum (strain ATCC 33453 / NBRC 100688 / NCTC 11704 / L1) (Acholeplasma florum).